The following is a 271-amino-acid chain: Mannosyl-3-phosphoglycerate phosphatase (271 aa).

Residue Asp-13 is the Nucleophile of the active site. Mg(2+) contacts are provided by Asp-13, Asp-15, and Asp-214.

This sequence belongs to the HAD-like hydrolase superfamily. MPGP family. Requires Mg(2+) as cofactor.

The protein resides in the cytoplasm. It carries out the reaction 2-O-(alpha-D-mannosyl)-3-phosphoglycerate + H2O = (2R)-2-O-(alpha-D-mannosyl)-glycerate + phosphate. The protein is Mannosyl-3-phosphoglycerate phosphatase of Escherichia coli O17:K52:H18 (strain UMN026 / ExPEC).